A 438-amino-acid polypeptide reads, in one-letter code: MNHKKLYIDTVGCQMNVNDSERIVTMLQPLGYTQTSRRHEAALILFNTCTVRAGAEECLLQNIANLKNLKRKKPGTLIGVAGCVAQQMGAELLQKFPWVDLVFGTHNLHLVPEMVKDAEAGRRRAETDFLDSSERLDLFPPIEGRKRVSAFVTVMQGCDNFCSYCIVPYVRGREISRRFAEILQEVQDLAAQGLREVVLLGQNVNSYGLKGEEQPSFAELVRAVAAVSGIDRVRFVTSHPKDMSDDLIACFADLAKLCGSLHLPAQAGNNRILKAMNRGYSREHYLETIYKLRQARPEIKITGDMIVGFPGETEAEFEETLSLMEEVRYFDLFSFVYSPRPGTKAAELSDELAKEVKLARLDRLQKLQAVHSRIHNETYVGSTQQVLVEGLAKRHGQVSGRCDSGRIVNLAGSPALIGKLVDVKILEGYANSLLGELL.

One can recognise an MTTase N-terminal domain in the interval 4 to 120; the sequence is KKLYIDTVGC…VPEMVKDAEA (117 aa). 6 residues coordinate [4Fe-4S] cluster: Cys-13, Cys-49, Cys-83, Cys-158, Cys-162, and Cys-165. The Radical SAM core domain maps to 144–377; the sequence is GRKRVSAFVT…QAVHSRIHNE (234 aa). Residues 377–438 form the TRAM domain; it reads ETYVGSTQQV…YANSLLGELL (62 aa).

Belongs to the methylthiotransferase family. MiaB subfamily. As to quaternary structure, monomer. The cofactor is [4Fe-4S] cluster.

The protein resides in the cytoplasm. It carries out the reaction N(6)-dimethylallyladenosine(37) in tRNA + (sulfur carrier)-SH + AH2 + 2 S-adenosyl-L-methionine = 2-methylsulfanyl-N(6)-dimethylallyladenosine(37) in tRNA + (sulfur carrier)-H + 5'-deoxyadenosine + L-methionine + A + S-adenosyl-L-homocysteine + 2 H(+). Catalyzes the methylthiolation of N6-(dimethylallyl)adenosine (i(6)A), leading to the formation of 2-methylthio-N6-(dimethylallyl)adenosine (ms(2)i(6)A) at position 37 in tRNAs that read codons beginning with uridine. In Trichlorobacter lovleyi (strain ATCC BAA-1151 / DSM 17278 / SZ) (Geobacter lovleyi), this protein is tRNA-2-methylthio-N(6)-dimethylallyladenosine synthase.